A 151-amino-acid chain; its full sequence is Ribosome maturation factor RimP (151 aa).

The protein belongs to the RimP family.

The protein localises to the cytoplasm. Its function is as follows. Required for maturation of 30S ribosomal subunits. This Shewanella amazonensis (strain ATCC BAA-1098 / SB2B) protein is Ribosome maturation factor RimP.